The chain runs to 404 residues: Probable tRNA sulfurtransferase (404 aa).

The region spanning 60–165 (HEVAESLKEI…DEAAYISYED (106 aa)) is the THUMP domain. Residues 183 to 184 (ML), 208 to 209 (HF), Arg-265, Gly-287, and Gln-296 contribute to the ATP site.

It belongs to the ThiI family.

The protein resides in the cytoplasm. The enzyme catalyses [ThiI sulfur-carrier protein]-S-sulfanyl-L-cysteine + a uridine in tRNA + 2 reduced [2Fe-2S]-[ferredoxin] + ATP + H(+) = [ThiI sulfur-carrier protein]-L-cysteine + a 4-thiouridine in tRNA + 2 oxidized [2Fe-2S]-[ferredoxin] + AMP + diphosphate. It catalyses the reaction [ThiS sulfur-carrier protein]-C-terminal Gly-Gly-AMP + S-sulfanyl-L-cysteinyl-[cysteine desulfurase] + AH2 = [ThiS sulfur-carrier protein]-C-terminal-Gly-aminoethanethioate + L-cysteinyl-[cysteine desulfurase] + A + AMP + 2 H(+). It participates in cofactor biosynthesis; thiamine diphosphate biosynthesis. Catalyzes the ATP-dependent transfer of a sulfur to tRNA to produce 4-thiouridine in position 8 of tRNAs, which functions as a near-UV photosensor. Also catalyzes the transfer of sulfur to the sulfur carrier protein ThiS, forming ThiS-thiocarboxylate. This is a step in the synthesis of thiazole, in the thiamine biosynthesis pathway. The sulfur is donated as persulfide by IscS. This Streptococcus agalactiae serotype V (strain ATCC BAA-611 / 2603 V/R) protein is Probable tRNA sulfurtransferase.